Here is a 519-residue protein sequence, read N- to C-terminus: Cell division cycle protein 20 homolog B (519 aa).

Residues 77–106 (WQLSPARDPESSSSVEEGPPSHTPESLASG) are disordered. The segment covering 87-96 (SSSSVEEGPP) has biased composition (low complexity). WD repeat units follow at residues 229-266 (RNDYYLNTLDWSSQNLVAVALGTSVYIWNGQNHSWIEN), 271-310 (VCCHYVSSVTWMREGSCLAVGTSEGEVQLWDAITKKQLRN), 353-392 (YHKEAVCSLKWSPDGRLLSSGCNDGLLTIWPHDPGAGVQG), 399-441 (PQST…NIQT), 443-484 (STQS…RSGG), and 487-519 (GHRDRVLHLSLSPDQTRLFSAAADGTACVWKCC).

The protein belongs to the WD repeat CDC20/Fizzy family. Expressed in multiciliated cells (MCCs).

Its subcellular location is the cytoplasm. Its function is as follows. Protein regulator of centriole-deuterosome disengagement and subsequently participates in the ciliogenesis in multiciliated cells (MCCs). The protein is Cell division cycle protein 20 homolog B of Mus musculus (Mouse).